A 611-amino-acid polypeptide reads, in one-letter code: Phosphomethylpyrimidine synthase (611 aa).

Residues Asn-218, Met-247, Tyr-276, His-312, 332-334, 373-376, and Glu-412 each bind substrate; these read SRG and DGLR. His-416 serves as a coordination point for Zn(2+). Residue Tyr-439 coordinates substrate. His-480 provides a ligand contact to Zn(2+). 3 residues coordinate [4Fe-4S] cluster: Cys-560, Cys-563, and Cys-568.

Belongs to the ThiC family. Homodimer. It depends on [4Fe-4S] cluster as a cofactor.

The catalysed reaction is 5-amino-1-(5-phospho-beta-D-ribosyl)imidazole + S-adenosyl-L-methionine = 4-amino-2-methyl-5-(phosphooxymethyl)pyrimidine + CO + 5'-deoxyadenosine + formate + L-methionine + 3 H(+). It functions in the pathway cofactor biosynthesis; thiamine diphosphate biosynthesis. In terms of biological role, catalyzes the synthesis of the hydroxymethylpyrimidine phosphate (HMP-P) moiety of thiamine from aminoimidazole ribotide (AIR) in a radical S-adenosyl-L-methionine (SAM)-dependent reaction. This Caulobacter sp. (strain K31) protein is Phosphomethylpyrimidine synthase.